A 922-amino-acid chain; its full sequence is Band 3 anion transport protein (922 aa).

Disordered stretches follow at residues 1 to 36 and 355 to 389; these read MEGPGQDTEDALRRSLDPEGYEDTKGSRTSLGTMSN and QHPDTVRSPGGPTAPKDTGDKGQAPQDDDPLLRTR. The Cytoplasmic portion of the chain corresponds to 1–416; the sequence is MEGPGQDTED…LSDIRDALNP (416 aa). A compositionally biased stretch (basic and acidic residues) spans 10–26; sequence DALRRSLDPEGYEDTKG. The segment covering 27–36 has biased composition (polar residues); sequence SRTSLGTMSN. The helical transmembrane segment at 417–440 threads the bilayer; the sequence is QCLAAVIFIYFAALSPAITFGGLL. At 441–448 the chain is on the extracellular side; the sequence is GEKTRGMM. The chain crosses the membrane as a helical span at residues 449-469; the sequence is GVSELLLSTSVQCLLFSLLSA. Residues 470–472 are Cytoplasmic-facing; it reads QPL. The discontinuously helical transmembrane segment at 473–489 threads the bilayer; the sequence is LVVGFSGPLLVFEEAFF. Residues 490–498 are Extracellular-facing; the sequence is RFCEDHGLE. The chain crosses the membrane as a helical span at residues 499–519; the sequence is YIVGRVWIGFWLILLVLLVVA. Residues 520–531 lie on the Cytoplasmic side of the membrane; sequence CEGTVLVRYLSR. Residues 532–554 traverse the membrane as a helical segment; it reads YTQEIFSFLISLIFIYETFAKLV. At 555–581 the chain is on the extracellular side; it reads TIFEAHPLQQSYDTDVSTEPSVPKPNT. A helical transmembrane segment spans residues 582–602; sequence ALLSLVLMAGTFFLALFLRQF. Over 603-613 the chain is Cytoplasmic; the sequence is KNSVFLPGKVR. Residues 614 to 634 traverse the membrane as a helical segment; the sequence is RLIGDFGVPISIFVMALADFF. The Extracellular portion of the chain corresponds to 635-674; it reads IKDTYTQKLKVPRGLEVTNGTARGWFIHPMGSATPFPIWM. Residue asparagine 653 is glycosylated (N-linked (GlcNAc...) asparagine). A helical transmembrane segment spans residues 675–695; sequence MFASPVPALLVFILIFLETQI. Residues 696 to 711 are Cytoplasmic-facing; it reads TTLIVSKPERKLVKGS. A helical membrane pass occupies residues 712–730; the sequence is GFHLDLLLIVAMGGLAALF. A discontinuously helical transmembrane segment spans residues 731-748; that stretch reads GMPWLSATTVRTITHANA. Over 749 to 771 the chain is Cytoplasmic; the sequence is LTVVGKSAVPGERAHIVEVKEQR. The next 2 helical transmembrane spans lie at 772–792 and 793–811; these read LSGLLVAVLIGVSILMEPILK and YIPLAVLFGIFLYMGVTSL. The Cytoplasmic portion of the chain corresponds to 812–849; that stretch reads FGIQLFDRILLLLMPPKYHPKEPYVTRVKTWRITSSPL. The discontinuously helical intramembrane region spans 850–880; sequence TQILVVALLWGVKVSPASLRCPFVLVLTVPL. Over 881-922 the chain is Cytoplasmic; it reads RRLLLPRIFSEIELKCLDTDDAVVTFEEAEGQDVYNEVQMPS.

Belongs to the anion exchanger (TC 2.A.31) family. A dimer in solution, it spans the membrane asymmetrically and appears to be tetrameric. Erythrocytes.

Its subcellular location is the cell membrane. The protein resides in the basolateral cell membrane. It catalyses the reaction hydrogencarbonate(in) + chloride(out) = hydrogencarbonate(out) + chloride(in). Functions both as a transporter that mediates electroneutral anion exchange across the cell membrane and as a structural protein. Major integral membrane glycoprotein of the erythrocyte membrane; required for normal flexibility and stability of the erythrocyte membrane and for normal erythrocyte shape via the interactions of its cytoplasmic domain with cytoskeletal proteins, glycolytic enzymes, and hemoglobin. Functions as a transporter that mediates the 1:1 exchange of inorganic anions across the erythrocyte membrane. Mediates chloride-bicarbonate exchange in the kidney, and is required for normal acidification of the urine. The chain is Band 3 anion transport protein (SLC4A1) from Gallus gallus (Chicken).